Reading from the N-terminus, the 241-residue chain is Agamous-like MADS-box protein AGL9 homolog (241 aa).

In terms of domain architecture, MADS-box spans 3-57; sequence RGRVELKRIENKINRQVTFAKRRNGLLKKAYELSVLCDAEVALIIFSNRGKLYEF. A K-box domain is found at 89–179; that stretch reads EISSQQEYLK…KQRLMEGSTL (91 aa).

It is found in the nucleus. Probable transcription factor. The polypeptide is Agamous-like MADS-box protein AGL9 homolog (FBP2) (Petunia hybrida (Petunia)).